Reading from the N-terminus, the 142-residue chain is Putative pre-16S rRNA nuclease (142 aa).

The protein belongs to the YqgF nuclease family.

The protein resides in the cytoplasm. Functionally, could be a nuclease involved in processing of the 5'-end of pre-16S rRNA. This Staphylococcus saprophyticus subsp. saprophyticus (strain ATCC 15305 / DSM 20229 / NCIMB 8711 / NCTC 7292 / S-41) protein is Putative pre-16S rRNA nuclease.